We begin with the raw amino-acid sequence, 59 residues long: Transcription elongation factor Spt4 (59 aa).

4 residues coordinate Zn(2+): cysteine 4, cysteine 7, cysteine 16, and cysteine 19.

Belongs to the archaeal Spt4 family. As to quaternary structure, heterodimer composed of Spt4 and Spt5.

Its function is as follows. Stimulates transcription elongation. The polypeptide is Transcription elongation factor Spt4 (Methanocaldococcus jannaschii (strain ATCC 43067 / DSM 2661 / JAL-1 / JCM 10045 / NBRC 100440) (Methanococcus jannaschii)).